Reading from the N-terminus, the 369-residue chain is Protein RecA (369 aa).

66–73 serves as a coordination point for ATP; sequence GPESSGKT. A disordered region spans residues 328–369; the sequence is GIDAESLEEKEDPEKVKEQRAKKAAPGEEKPAEPASPEKTDK. The span at 339-369 shows a compositional bias: basic and acidic residues; that stretch reads DPEKVKEQRAKKAAPGEEKPAEPASPEKTDK.

This sequence belongs to the RecA family.

The protein resides in the cytoplasm. In terms of biological role, can catalyze the hydrolysis of ATP in the presence of single-stranded DNA, the ATP-dependent uptake of single-stranded DNA by duplex DNA, and the ATP-dependent hybridization of homologous single-stranded DNAs. It interacts with LexA causing its activation and leading to its autocatalytic cleavage. The polypeptide is Protein RecA (Lactobacillus delbrueckii subsp. bulgaricus (strain ATCC BAA-365 / Lb-18)).